The sequence spans 187 residues: MGKQPLAKKAEIVDKVRSLLQASQMVLVIDYKGLTVAEMDQLRAELRKSDSVCMVVKNTLMRRAIADQKAWAGIIPFLAGPTAFILIRGDISAALKAYQDFAKQTKKTEFRGAGIEGLSLTLEQAKAIAELPPKEVLMAQVAGSLKSVATGLAVGLNAVPTQVARGIHEIPASLGRAIRAIADKEAA.

Belongs to the universal ribosomal protein uL10 family. Part of the ribosomal stalk of the 50S ribosomal subunit. The N-terminus interacts with L11 and the large rRNA to form the base of the stalk. The C-terminus forms an elongated spine to which L12 dimers bind in a sequential fashion forming a multimeric L10(L12)X complex.

Its function is as follows. Forms part of the ribosomal stalk, playing a central role in the interaction of the ribosome with GTP-bound translation factors. The sequence is that of Large ribosomal subunit protein uL10 from Synechococcus sp. (strain JA-2-3B'a(2-13)) (Cyanobacteria bacterium Yellowstone B-Prime).